Consider the following 61-residue polypeptide: Small ribosomal subunit protein uS14 (61 aa).

Zn(2+)-binding residues include Cys-24, Cys-27, Cys-40, and Cys-43.

It belongs to the universal ribosomal protein uS14 family. Zinc-binding uS14 subfamily. Part of the 30S ribosomal subunit. Contacts proteins S3 and S10. The cofactor is Zn(2+).

Functionally, binds 16S rRNA, required for the assembly of 30S particles and may also be responsible for determining the conformation of the 16S rRNA at the A site. The polypeptide is Small ribosomal subunit protein uS14 (Aliarcobacter butzleri (strain RM4018) (Arcobacter butzleri)).